Reading from the N-terminus, the 378-residue chain is Metacaspase-1B (378 aa).

A disordered region spans residues Met-1 to Ala-70. Residues Gln-10 to Gly-29 show a composition bias toward low complexity. Residues His-169 and Cys-225 contribute to the active site.

It belongs to the peptidase C14B family.

Functionally, involved in cell death (apoptosis). The sequence is that of Metacaspase-1B (casB) from Aspergillus terreus (strain NIH 2624 / FGSC A1156).